A 338-amino-acid polypeptide reads, in one-letter code: MYSLDWPRAYGIPNSTATFKSLPEDFQVNELFEGQFNGEGEHIVLKIEKRGLTTEEVVKSLARLINKPVKLISHAGLKDKQALTTQWLSVHAPGEIIDGIETLEAPGWRILECTRHNKKLKPGFLSGNHFIITLRNVSDESDLIHRIEQIKFKGVPNYFGEQRFGRDGGNLIKAEEILVQGRKVKDRFLKGMYFSAARSWLYNLILSRRVKESSWNLPLLGDVIQLVGSNSIFVNDKSMDEQLLQRIGEKDVSPASPLPGRSKNLVKGTALQIINDVYEEWSAWLDGLEKNGLEEAWRANILYAEQIEYRINQGTVELSFVLPAGAYATVVLRELVQY.

Asp79 serves as the catalytic Nucleophile. The TRUD domain occupies 154–303; the sequence is GVPNYFGEQR…EEAWRANILY (150 aa).

It belongs to the pseudouridine synthase TruD family.

It catalyses the reaction uridine(13) in tRNA = pseudouridine(13) in tRNA. Responsible for synthesis of pseudouridine from uracil-13 in transfer RNAs. The protein is tRNA pseudouridine synthase D of Legionella pneumophila (strain Corby).